A 117-amino-acid chain; its full sequence is Large ribosomal subunit protein uL18 (117 aa).

The protein belongs to the universal ribosomal protein uL18 family. Part of the 50S ribosomal subunit; part of the 5S rRNA/L5/L18/L25 subcomplex. Contacts the 5S and 23S rRNAs.

In terms of biological role, this is one of the proteins that bind and probably mediate the attachment of the 5S RNA into the large ribosomal subunit, where it forms part of the central protuberance. The polypeptide is Large ribosomal subunit protein uL18 (Francisella philomiragia subsp. philomiragia (strain ATCC 25017 / CCUG 19701 / FSC 153 / O#319-036)).